Reading from the N-terminus, the 88-residue chain is Putative defensin-like protein 264 (88 aa).

Residues 1–26 form the signal peptide; that stretch reads MEKMVLRKVVLLAILLSLSCLWVAKA. Cystine bridges form between cysteine 47–cysteine 65, cysteine 53–cysteine 70, and cysteine 57–cysteine 72.

The protein belongs to the DEFL family.

The protein localises to the secreted. The protein is Putative defensin-like protein 264 of Arabidopsis thaliana (Mouse-ear cress).